We begin with the raw amino-acid sequence, 932 residues long: Protocadherin gamma-A8 (932 aa).

Positions 1-29 (MAAPQSRPRRGELILLCALLGTLWEIGRG) are cleaved as a signal peptide. Cadherin domains follow at residues 30 to 133 (QIRY…NPKF), 134 to 242 (QVED…APVF), 243 to 347 (PHPI…RPEV), 348 to 452 (IITS…PPTF), 453 to 562 (PHAS…APEI), and 570 to 682 (DGST…KPSV). The Extracellular segment spans residues 30–692 (QIRYSVPEET…DPNDSSLTLY (663 aa)). Asn47 carries N-linked (GlcNAc...) asparagine glycosylation. N-linked (GlcNAc...) asparagine glycans are attached at residues Asn414, Asn419, and Asn545. Residue Asn685 is glycosylated (N-linked (GlcNAc...) asparagine). Residues 693–713 (LVVAVAAISCVFLAFVAVLLG) form a helical membrane-spanning segment. The Cytoplasmic portion of the chain corresponds to 714–932 (LRLRRWHKSR…KKKSGKKEKK (219 aa)). Disordered stretches follow at residues 804 to 841 (ADHG…WPNN) and 902 to 932 (ATLT…KEKK). Residues 810–841 (APPNTDWRFSQAQRPGTSGSQNGDDTGTWPNN) are compositionally biased toward polar residues. Over residues 922-932 (NKKKSGKKEKK) the composition is skewed to basic residues.

Its subcellular location is the cell membrane. Potential calcium-dependent cell-adhesion protein. May be involved in the establishment and maintenance of specific neuronal connections in the brain. The protein is Protocadherin gamma-A8 (PCDHGA8) of Homo sapiens (Human).